We begin with the raw amino-acid sequence, 162 residues long: Interleukin-15 (162 aa).

Residues 1 to 29 form the signal peptide; it reads MKILKPYMRNTSISCYLCFLLNSHFLTEA. Residues 30–48 constitute a propeptide that is removed on maturation; that stretch reads GIHVFILGCVSVGLPKTEA. Intrachain disulfides connect cysteine 83–cysteine 133 and cysteine 90–cysteine 136. N-linked (GlcNAc...) asparagine glycans are attached at residues asparagine 104, asparagine 108, and asparagine 119.

The protein belongs to the IL-15/IL-21 family.

The protein resides in the secreted. Its function is as follows. Cytokine that plays a major role in the development of inflammatory and protective immune responses to microbial invaders and parasites by modulating immune cells of both the innate and adaptive immune systems. Stimulates the proliferation and activation of natural killer cells, T-cells and B-cells and promotes the secretion of several cytokines. In monocytes, induces the production of IL8 and monocyte chemotactic protein 1/CCL2, two chemokines that attract neutrophils and monocytes respectively to sites of infection. Unlike most cytokines, which are secreted in soluble form, IL15 is expressed in association with its high affinity IL15RA on the surface of IL15-producing cells and delivers signals to target cells that express IL2RB and IL2RG receptor subunits. Binding to its receptor triggers the phosphorylation of JAK1 and JAK3 and the recruitment and subsequent phosphorylation of signal transducer and activator of transcription-3/STAT3 and STAT5. In mast cells, induces the rapid tyrosine phosphorylation of STAT6 and thereby controls mast cell survival and release of cytokines such as IL4. The chain is Interleukin-15 (Il15) from Mus musculus (Mouse).